A 370-amino-acid polypeptide reads, in one-letter code: Protein maelstrom 2 (370 aa).

The segment at residues 2–68 is a DNA-binding region (HMG box); sequence AQNKPNAFMA…VLERESKTER (67 aa).

The protein belongs to the maelstrom family.

The protein localises to the cytoplasm. The protein resides in the nucleus. In terms of biological role, involved both in the piRNA and miRNA metabolic processes. As a component of the meiotic nuage, plays a central role during oogenesis by repressing transposable elements and preventing their mobilization, which is essential for the germline integrity. Repression of transposable elements is mediated via the piRNA metabolic process, which mediates the repression of transposable elements during meiosis by forming complexes composed of piRNAs and Piwi proteins and governs the repression of transposons. As a nuclear component, it is required for proper differentiation in the germline stem cell (GSC) lineage by repressing microRNA-7 (miR-7), thereby acting as an indirect regulator of bag-of-marbles (Bam). Acts by binding to the promoter of miR-7 gene and repressing its expression; miR-7 repression alleviates the Bam repression by miR-7, thereby allowing differentiation in the germline stem cell (GSC) lineage. In Drosophila pseudoobscura pseudoobscura (Fruit fly), this protein is Protein maelstrom 2 (mael2).